Reading from the N-terminus, the 511-residue chain is MSVTQKKTEISTTTTYEGESRPSSGMSGFSYSAKIHPRTSGYINRSSQSPFRSSMGSNAAYTRSYDFSYGATAMPGRYANISSTGVNHVKANREREKQDMRDLNERFANYIEKVRFLEAQNKKLAGELEELKSKWGKETSAIKEMYETELEEARKLIDATNKEKITLDVRVTELIDQLERQQKDLEESRTYHQIDQEQIARQNQQLADLEGEISMLRRSIESLEKEKMRQSNILAKMNDEMEKMRMDLNNETINHLDAENRRQTLEEELEFQKDVHAQELKELAALAYRDTTAENREFWRNELAQAIRDIQQEYDAKCDQMRGDIEAYYNLKVQEFRTGATKQNMEVTRNKEENTKLKSNMTEIRNRLADLEARNAQLERTNQDLLRDLEEKDRQNELESCQYKEEITKLRGEMESILKELQDLMDIKLSLELEIAAYRKLLEGEESRVGMKQIVEQVVGARPNEAEVLSTILTRSEGGYEATGGITTTTTTSSQERRSMSEEKKSMGSSD.

Residues 1-32 are disordered; that stretch reads MSVTQKKTEISTTTTYEGESRPSSGMSGFSYS. Residues 1–99 form a head region; sequence MSVTQKKTEI…KANREREKQD (99 aa). The span at 21-30 shows a compositional bias: polar residues; sequence RPSSGMSGFS. The region spanning 96–449 is the IF rod domain; that stretch reads EKQDMRDLNE…KLLEGEESRV (354 aa). The segment at 100-135 is coil 1A; it reads MRDLNERFANYIEKVRFLEAQNKKLAGELEELKSKW. The linker 1 stretch occupies residues 136–145; that stretch reads GKETSAIKEM. The tract at residues 146-284 is coil 1B; sequence YETELEEARK…VHAQELKELA (139 aa). Positions 285–303 are linker 12; the sequence is ALAYRDTTAENREFWRNEL. Positions 304-449 are coil 2; the sequence is AQAIRDIQQE…KLLEGEESRV (146 aa). The segment at 450–511 is tail; sequence GMKQIVEQVV…EEKKSMGSSD (62 aa). The tract at residues 479–511 is disordered; sequence GYEATGGITTTTTTSSQERRSMSEEKKSMGSSD. A compositionally biased stretch (low complexity) spans 483 to 492; the sequence is TGGITTTTTT. The span at 495 to 511 shows a compositional bias: basic and acidic residues; the sequence is QERRSMSEEKKSMGSSD.

Belongs to the intermediate filament family.

Functionally, major squid neurofilament protein. This is 60 kDa neurofilament protein from Doryteuthis pealeii (Longfin inshore squid).